Consider the following 252-residue polypeptide: Thiazole synthase (252 aa).

Lysine 91 functions as the Schiff-base intermediate with DXP in the catalytic mechanism. 1-deoxy-D-xylulose 5-phosphate is bound by residues glycine 152, 179–180 (AG), and 201–202 (NT).

It belongs to the ThiG family. In terms of assembly, homotetramer. Forms heterodimers with either ThiH or ThiS.

The protein localises to the cytoplasm. It carries out the reaction [ThiS sulfur-carrier protein]-C-terminal-Gly-aminoethanethioate + 2-iminoacetate + 1-deoxy-D-xylulose 5-phosphate = [ThiS sulfur-carrier protein]-C-terminal Gly-Gly + 2-[(2R,5Z)-2-carboxy-4-methylthiazol-5(2H)-ylidene]ethyl phosphate + 2 H2O + H(+). The protein operates within cofactor biosynthesis; thiamine diphosphate biosynthesis. Functionally, catalyzes the rearrangement of 1-deoxy-D-xylulose 5-phosphate (DXP) to produce the thiazole phosphate moiety of thiamine. Sulfur is provided by the thiocarboxylate moiety of the carrier protein ThiS. In vitro, sulfur can be provided by H(2)S. This Erwinia amylovora (Fire blight bacteria) protein is Thiazole synthase.